Reading from the N-terminus, the 307-residue chain is Aspartate carbamoyltransferase catalytic subunit (307 aa).

2 residues coordinate carbamoyl phosphate: Arg56 and Thr57. Position 84 (Lys84) interacts with L-aspartate. Residues Arg106, His136, and Gln139 each contribute to the carbamoyl phosphate site. Residues Arg169 and Arg221 each coordinate L-aspartate. Ala262 and Pro263 together coordinate carbamoyl phosphate.

Belongs to the aspartate/ornithine carbamoyltransferase superfamily. ATCase family. In terms of assembly, heterododecamer (2C3:3R2) of six catalytic PyrB chains organized as two trimers (C3), and six regulatory PyrI chains organized as three dimers (R2).

It catalyses the reaction carbamoyl phosphate + L-aspartate = N-carbamoyl-L-aspartate + phosphate + H(+). It participates in pyrimidine metabolism; UMP biosynthesis via de novo pathway; (S)-dihydroorotate from bicarbonate: step 2/3. Catalyzes the condensation of carbamoyl phosphate and aspartate to form carbamoyl aspartate and inorganic phosphate, the committed step in the de novo pyrimidine nucleotide biosynthesis pathway. This chain is Aspartate carbamoyltransferase catalytic subunit, found in Streptococcus pneumoniae (strain JJA).